Here is a 122-residue protein sequence, read N- to C-terminus: Large ribosomal subunit protein uL14c (122 aa).

Belongs to the universal ribosomal protein uL14 family. As to quaternary structure, part of the 50S ribosomal subunit.

Its subcellular location is the plastid. The protein localises to the chloroplast. Its function is as follows. Binds to 23S rRNA. The chain is Large ribosomal subunit protein uL14c from Cucumis sativus (Cucumber).